The sequence spans 364 residues: Peroxidase (364 aa).

The N-terminal stretch at 1 to 20 (MKLSLFSTFAAVIIGALALP) is a signal peptide. Glutamine 21 is subject to Pyrrolidone carboxylic acid. Disulfide bonds link cysteine 32–cysteine 44, cysteine 43–cysteine 313, cysteine 63–cysteine 149, and cysteine 277–cysteine 342. The active-site Proton acceptor is the histidine 76. Ca(2+) contacts are provided by aspartate 77, glycine 95, aspartate 97, and serine 99. Residue asparagine 163 is glycosylated (N-linked (GlcNAc...) (high mannose) asparagine). Residue histidine 204 coordinates heme b. Serine 205, aspartate 222, threonine 224, valine 227, and aspartate 229 together coordinate Ca(2+).

This sequence belongs to the peroxidase family. Ligninase subfamily. Ca(2+) serves as cofactor. Heme b is required as a cofactor.

Its subcellular location is the secreted. It carries out the reaction 2 a phenolic donor + H2O2 = 2 a phenolic radical donor + 2 H2O. The sequence is that of Peroxidase from Arthromyces ramosus.